We begin with the raw amino-acid sequence, 504 residues long: L-amino-acid oxidase (504 aa).

The N-terminal stretch at 1 to 18 (MNVFFMFSLLFLAALGSC) is a signal peptide. A disulfide bridge connects residues cysteine 28 and cysteine 191. Residues 61–62 (MS), 81–82 (EA), arginine 89, and 105–108 (GPMR) contribute to the FAD site. Residue arginine 108 coordinates substrate. A glycan (N-linked (GlcNAc...) asparagine) is linked at asparagine 190. Residue histidine 241 coordinates substrate. Valine 279 lines the FAD pocket. Cysteine 349 and cysteine 430 are disulfide-bonded. The N-linked (GlcNAc...) asparagine glycan is linked to asparagine 379. Position 390 (tyrosine 390) interacts with substrate. FAD-binding positions include glutamate 475 and 482–487 (GWIDST). Position 482-483 (482-483 (GW)) interacts with substrate.

It belongs to the flavin monoamine oxidase family. FIG1 subfamily. As to quaternary structure, homodimer; non-covalently linked. The cofactor is FAD. In terms of tissue distribution, expressed by the venom gland.

The protein resides in the secreted. It carries out the reaction an L-alpha-amino acid + O2 + H2O = a 2-oxocarboxylate + H2O2 + NH4(+). The enzyme catalyses L-leucine + O2 + H2O = 4-methyl-2-oxopentanoate + H2O2 + NH4(+). Functionally, catalyzes an oxidative deamination of predominantly hydrophobic and aromatic L-amino acids, thus producing hydrogen peroxide that may contribute to the diverse toxic effects of this enzyme. Shows activity on L-Leu. Exhibits diverse biological activities, such as hemorrhage, hemolysis, edema, antibacterial and antiparasitic activities, as well as regulation of platelet aggregation. Its effect on platelets is controversial, since it either induces aggregation or inhibits agonist-induced aggregation. These different effects are probably due to different experimental conditions. This protein induces apoptosis of cultured HeLa cells. The chain is L-amino-acid oxidase from Gloydius halys (Chinese water mocassin).